The chain runs to 345 residues: MGKPGFSPRGGGGGGGGGGGGFRGRGGGGGGGGGGGFGGGRGRGGGGDRGGRGGFGGGRGGGGRGGGGGGGRGGFGGRGGGGGRGGGGRGGGGRGGGGRGGGAGGFKGGKTVTIEPHRHEGVFIARGKEDALVTRNFVPGSEVYGEKRISVENNGEKIEYRVWNPFRSKLAAAVLGGVEQIHMPPGSKVLYLGAASGTTVSHVSDVVGPEGLVYAVEFSHRSGRDLINVAKKRTNIIPIIEDARHPHKYRMLVGMVDTIFADVAQPDQGRIVALNAQHFLKNGGHFVISIKASCIDSTAQPEAVFASEVKKMQADKLKPQEQLTLEPYERDHAVVVGVYRPPPKQ.

Residues M1 to I114 form a disordered region. The span at P8 to G108 shows a compositional bias: gly residues. Asymmetric dimethylarginine occurs at positions 9, 23, 25, 41, 43, 49, 52, 59, 64, 72, 78, 84, 89, 94, and 99. Residues T198 to T199, E217 to F218, D242 to A243, and D262 to Q265 each bind S-adenosyl-L-methionine.

This sequence belongs to the methyltransferase superfamily. Fibrillarin family. As to quaternary structure, component of box C/D small nucleolar ribonucleoprotein (snoRNP) particles. It is associated with the U3, U8 and U13 small nuclear RNAs. In terms of processing, by homology to other fibrillarins, some or all of the N-terminal domain arginines are modified to asymmetric dimethylarginine (DMA).

The protein resides in the nucleus. It localises to the nucleolus. The catalysed reaction is L-glutaminyl-[histone H2A] + S-adenosyl-L-methionine = N(5)-methyl-L-glutaminyl-[histone H2A] + S-adenosyl-L-homocysteine + H(+). S-adenosyl-L-methionine-dependent methyltransferase that has the ability to methylate both RNAs and proteins. Involved in pre-rRNA processing. Utilizes the methyl donor S-adenosyl-L-methionine to catalyze the site-specific 2'-hydroxyl methylation of ribose moieties in pre-ribosomal RNA. Site specificity is provided by a guide RNA that base pairs with the substrate. Methylation occurs at a characteristic distance from the sequence involved in base pairing with the guide RNA. Also acts as a protein methyltransferase by mediating methylation of 'Gln-105' of histone H2A (H2AQ105me), a modification that impairs binding of the FACT complex and is specifically present at 35S ribosomal DNA locus. The protein is rRNA 2'-O-methyltransferase fibrillarin of Drosophila erecta (Fruit fly).